The sequence spans 247 residues: Nodulation protein H (247 aa).

Residues 1–16 (MTHSTLPPRPFAILAM) are hydrophobic.

Its function is as follows. Required for the formation of sulfated nod factor. Proposed to transfer activated sulfate (PAPS) to a N-acetylglucosamine of the nod factor. The sequence is that of Nodulation protein H (nodH) from Rhizobium meliloti (Ensifer meliloti).